Consider the following 242-residue polypeptide: MNKRFNSEDKIILAIDGLDLSQAKLLLEKCPHVKWVKVGLELFVREGPRVIEILKGLNKKIFLDLKFHDIPNTMSAACFQVSKLGVDIISIHASAGLKALKDSKKASLEGATSVSVKPPFVVGITVLTSFSLKDFQTDLDRNNSIEENVLRLAKLSFDAGLDGCVCSPWEVKMLRSNYKNNFELITPGIRLNIDSKDDQNRIMTPHEAIDNGASKLVIGRSISKAIDPNMALIEIFKSIDSD.

Substrate is bound by residues D16, K37, 64-73 (DLKFHDIPNT), T128, R190, Q199, G219, and R220. Residue K66 is the Proton donor of the active site.

The protein belongs to the OMP decarboxylase family. Type 1 subfamily. Homodimer.

The catalysed reaction is orotidine 5'-phosphate + H(+) = UMP + CO2. It participates in pyrimidine metabolism; UMP biosynthesis via de novo pathway; UMP from orotate: step 2/2. Functionally, catalyzes the decarboxylation of orotidine 5'-monophosphate (OMP) to uridine 5'-monophosphate (UMP). The chain is Orotidine 5'-phosphate decarboxylase from Prochlorococcus marinus (strain AS9601).